Consider the following 341-residue polypeptide: Anthranilate phosphoribosyltransferase (341 aa).

Residues Gly80, 83–84 (GD), Thr88, 90–93 (NIST), 108–116 (KHGNRAMSS), and Ser120 contribute to the 5-phospho-alpha-D-ribose 1-diphosphate site. Gly80 contacts anthranilate. Ser92 contributes to the Mg(2+) binding site. Anthranilate is bound at residue Asn111. Arg166 is an anthranilate binding site. 2 residues coordinate Mg(2+): Asp225 and Glu226.

Belongs to the anthranilate phosphoribosyltransferase family. Homodimer. Mg(2+) serves as cofactor.

The catalysed reaction is N-(5-phospho-beta-D-ribosyl)anthranilate + diphosphate = 5-phospho-alpha-D-ribose 1-diphosphate + anthranilate. Its pathway is amino-acid biosynthesis; L-tryptophan biosynthesis; L-tryptophan from chorismate: step 2/5. In terms of biological role, catalyzes the transfer of the phosphoribosyl group of 5-phosphorylribose-1-pyrophosphate (PRPP) to anthranilate to yield N-(5'-phosphoribosyl)-anthranilate (PRA). In Roseiflexus sp. (strain RS-1), this protein is Anthranilate phosphoribosyltransferase.